Reading from the N-terminus, the 229-residue chain is Cytidylate kinase (229 aa).

ATP is bound at residue 10-18 (GFSSCGKST).

The protein belongs to the cytidylate kinase family. Type 1 subfamily.

It localises to the cytoplasm. It carries out the reaction CMP + ATP = CDP + ADP. It catalyses the reaction dCMP + ATP = dCDP + ADP. The protein is Cytidylate kinase of Bacteroides fragilis (strain ATCC 25285 / DSM 2151 / CCUG 4856 / JCM 11019 / LMG 10263 / NCTC 9343 / Onslow / VPI 2553 / EN-2).